The following is a 225-amino-acid chain: DnaA regulatory inactivator Hda (225 aa).

The protein belongs to the DnaA family. HdA subfamily. As to quaternary structure, the active form seems to be an ADP-bound monomer. Forms the RIDA complex (regulatory inactivation of DnaA) of ATP-DnaA, ADP-Hda and the DNA-loaded beta sliding clamp (dnaN).

In terms of biological role, mediates the interaction of DNA replication initiator protein DnaA with DNA polymerase subunit beta sliding clamp (dnaN). Stimulates hydrolysis of ATP-DnaA to ADP-DnaA, rendering DnaA inactive for reinitiation, a process called regulatory inhibition of DnaA or RIDA. The chain is DnaA regulatory inactivator Hda from Klebsiella pneumoniae (strain 342).